Consider the following 248-residue polypeptide: MSTDKKNRTVSHLMIWNELKWAPSEKQLAQFIHLQELLKEWNKKINLTRLVDGDDFWTAQVCDSLLPLYEELQHPEVSHKYIDIGSGCGFPGIAIAIAMPNSDITLLDSSSKKTTFLKEVSKEIGLDSRIKVVTERAEEAGRNPIFRSNFDYAIARAVASANVVAEYLVPFLNSTGQALIFKGSWSEAEQQILKKALAELNAEIQRTHEFILPNNRGIRNIIRISSINKCPHQYPRSIGKPKKQPLGY.

S-adenosyl-L-methionine is bound by residues Gly85, Phe90, 108–110 (DSS), 137–138 (AE), and Arg156.

The protein belongs to the methyltransferase superfamily. RNA methyltransferase RsmG family.

It localises to the cytoplasm. Its function is as follows. Specifically methylates the N7 position of a guanine in 16S rRNA. The polypeptide is Ribosomal RNA small subunit methyltransferase G (Prochlorococcus marinus (strain NATL1A)).